Reading from the N-terminus, the 261-residue chain is Type II restriction enzyme Sau96I (261 aa).

Monomer.

The enzyme catalyses Endonucleolytic cleavage of DNA to give specific double-stranded fragments with terminal 5'-phosphates.. In terms of biological role, a P subtype restriction enzyme that recognizes the double-stranded sequence 5'-GGNCC-3' and cleaves after G-1. The polypeptide is Type II restriction enzyme Sau96I (Staphylococcus aureus).